The primary structure comprises 159 residues: Transcription elongation factor A protein-like 1 (159 aa).

The tract at residues 1–120 (MEKACKEPEE…PQFRGDIHGR (120 aa)) is disordered. Residues 17–34 (KADEERPSVEPSPEKSSP) show a composition bias toward basic and acidic residues. Residues 37 to 54 (QSSEEVSSEEEFFPDELL) show a composition bias toward acidic residues. Basic and acidic residues-rich tracts occupy residues 64–80 (SEER…DLFE) and 95–119 (HKLE…DIHG).

This sequence belongs to the TFS-II family. TFA subfamily.

Its subcellular location is the nucleus. Functionally, may be involved in transcriptional regulation. Modulates various viral and cellular promoters in a promoter context-dependent manner. Does not bind DNA directly. This chain is Transcription elongation factor A protein-like 1, found in Bos taurus (Bovine).